We begin with the raw amino-acid sequence, 149 residues long: Protein FAM72B (149 aa).

The protein belongs to the FAM72 family.

This chain is Protein FAM72B (FAM72B), found in Homo sapiens (Human).